The sequence spans 1295 residues: DNA (cytosine-5)-methyltransferase CMT2 (1295 aa).

Disordered stretches follow at residues 1 to 23 (MLSP…SSSR), 61 to 91 (RRST…GKSQ), and 249 to 287 (NSSK…GKGM). Residues 61-72 (RRSTTLNCNSPE) show a composition bias toward polar residues. Residues 578 to 693 (HTFSLGDFAY…VEYSTFQTLR (116 aa)) form the BAH domain. The SAM-dependent MTase C5-type domain occupies 727–1268 (LPVLDLYSGC…YSLGMAFRGL (542 aa)). Residues 814–835 (SVNSTKETSGSSSSSDDDSDSE) form a disordered region. The 66-residue stretch at 837–902 (YEVEKLVDIC…SGFKSKILPL (66 aa)) folds into the Chromo domain. C915 is an active-site residue.

It belongs to the class I-like SAM-binding methyltransferase superfamily. C5-methyltransferase family.

It localises to the nucleus. The catalysed reaction is a 2'-deoxycytidine in DNA + S-adenosyl-L-methionine = a 5-methyl-2'-deoxycytidine in DNA + S-adenosyl-L-homocysteine + H(+). Functionally, may be involved in the CpXpG methylation and in gene silencing. The chain is DNA (cytosine-5)-methyltransferase CMT2 (CMT2) from Arabidopsis thaliana (Mouse-ear cress).